The following is a 432-amino-acid chain: MSVITDIHAREVLDSRGNPTVEAEVYTELGGFGRAIVPSGASTGEHEAVELRDGDKSRFGGQGVLTAVENVNGEIAKAVIGLDVTDQRLIDQTMIDLDGTPNKGRLGANAILSVSLASARAAADELGLPLYEYLGGPNAHVLPTPMMNVINGGKHADNNVDIQEFMIMPVGAKSLHEAVRMGAETFHTLKGLLQERGESTAVGDEGGFAPNLKNNEEPFEILVEAIQRAGYKPGQDIAIAFDCAASEFYNKDTKKYVTVADGREYTAEEWTSLIEDLVDKYPVISVEDPLDENDWEGWKTFTERLGDKVQIVGDDLFVTNTSYLEKGIKMGVANSILIKLNQIGTLTETFEAIEMAKEAGYTAVVSHRSGETEDTTIADLVVATNAGQIKTGSMSRTDRIAKYNQLMRIEEALGSTAQYKGIHSFYNLHKQF.

Gln163 contacts (2R)-2-phosphoglycerate. Glu205 acts as the Proton donor in catalysis. Positions 242, 287, and 314 each coordinate Mg(2+). Residues Lys339, Arg368, Ser369, and Lys390 each coordinate (2R)-2-phosphoglycerate. Lys339 functions as the Proton acceptor in the catalytic mechanism.

The protein belongs to the enolase family. As to quaternary structure, homodimer. Probably forms octamers. It depends on Mg(2+) as a cofactor.

It is found in the cytoplasm. Its subcellular location is the secreted. It localises to the cell surface. The enzyme catalyses (2R)-2-phosphoglycerate = phosphoenolpyruvate + H2O. The protein operates within carbohydrate degradation; glycolysis; pyruvate from D-glyceraldehyde 3-phosphate: step 4/5. In terms of biological role, catalyzes the reversible conversion of 2-phosphoglycerate (2-PG) into phosphoenolpyruvate (PEP). It is essential for the degradation of carbohydrates via glycolysis. The protein is Enolase 2 of Lactobacillus gasseri (strain ATCC 33323 / DSM 20243 / BCRC 14619 / CIP 102991 / JCM 1131 / KCTC 3163 / NCIMB 11718 / NCTC 13722 / AM63).